The following is a 374-amino-acid chain: O-methyltransferase acrG (374 aa).

Y19, N70, D96, S128, and F129 together coordinate S-adenosyl-L-homocysteine. Residue F245 coordinates Mg(2+).

The protein belongs to the methyltransferase superfamily. Type-7 methyltransferase family.

Its pathway is secondary metabolite biosynthesis. O-methyltransferase; part of the cluster that mediates the biosynthesis of acurin A, a highly reduced polyketide coupled to a serine via a peptide bond. The activities of the highly reducing polyketide synthase acrA and the nonribosomal peptide synthetase acrB are collectively responsible for the synthesis of the acurin A core structure with a heptaketide backbone produced by acrA covalently fused to a L-serine by acrB. After the formation of the PK-NRP hybrid product, it is detached from acrB by reductive release to set up the formation of the lactam ring by aldol condensation. The hydrolyase acrC then catalyzes water loss to generate a double bond in the ring. This double bond is probably reduced, which is followed by three oxidations at C-22 to generate the carboxylic acid moiety, involving probably the FAD-binding monooxygenase acrE and the cytochrome P450 monooxygenases acrD and acrF. Finally, a last methylation step performed by the O-methyltransferase acrG leads to the production of acurin A. The chain is O-methyltransferase acrG from Aspergillus aculeatus (strain ATCC 16872 / CBS 172.66 / WB 5094).